The primary structure comprises 161 residues: Cyclic pyranopterin monophosphate synthase (161 aa).

Residues 75-77 (LCH) and 113-114 (ME) contribute to the substrate site. Residue Asp-128 is part of the active site.

This sequence belongs to the MoaC family. In terms of assembly, homohexamer; trimer of dimers.

It catalyses the reaction (8S)-3',8-cyclo-7,8-dihydroguanosine 5'-triphosphate = cyclic pyranopterin phosphate + diphosphate. Its pathway is cofactor biosynthesis; molybdopterin biosynthesis. In terms of biological role, catalyzes the conversion of (8S)-3',8-cyclo-7,8-dihydroguanosine 5'-triphosphate to cyclic pyranopterin monophosphate (cPMP). This is Cyclic pyranopterin monophosphate synthase from Escherichia coli O139:H28 (strain E24377A / ETEC).